An 85-amino-acid chain; its full sequence is Phosphocarrier protein HPr (85 aa).

The HPr domain maps to 1 to 85; it reads MFQRDIKITT…DLAKFLTTLK (85 aa). The Pros-phosphohistidine intermediate role is filled by H15.

It belongs to the HPr family.

The protein localises to the cytoplasm. Functionally, general (non sugar-specific) component of the phosphoenolpyruvate-dependent sugar phosphotransferase system (sugar PTS). This major carbohydrate active-transport system catalyzes the phosphorylation of incoming sugar substrates concomitantly with their translocation across the cell membrane. The phosphoryl group from phosphoenolpyruvate (PEP) is transferred to the phosphoryl carrier protein HPr by enzyme I. Phospho-HPr then transfers it to the PTS EIIA domain. This Buchnera aphidicola subsp. Baizongia pistaciae (strain Bp) protein is Phosphocarrier protein HPr (ptsH).